A 392-amino-acid chain; its full sequence is Monooxygenase AgnR1 (392 aa).

A signal peptide spans M1–A20. N134 is a glycosylation site (N-linked (GlcNAc...) asparagine).

Functionally, monooxygenase; part of the gene cluster that mediates the biosynthesis of agnestins, dihydroxy-xanthone metabolites. The pathway begins with the assembly and cyclization of atrochrysone thioester by the non-reducing polyketide synthase Agnpks1. The atrochrysone carboxyl ACP thioesterase AgnL7 then breaks the thioester bond and releases the atrochrysone carboxylic acid as the first enzyme-free intermediate. The decarboxylase AgnL1 then catalyzes the concerted decarboxylation-elimination required to convert atochrysone carboxylic acid into emodin anthrone, which is further oxidized to emodin by the anthrone oxygenase AgnL2. Emodin then undergoes reduction catalyzed by the oxidoreductase AgnL4 to yield the dihydroquinone tautomer which is the substrate for reduction by the short chain dehydrogenase AgnL6 reduction to produce hydroxyketone, followed by AgnL8 dehydration and likely spontaneous autoxidation to chrysophanol. Baeyer-Villiger oxidation by the oxidase AgnL3 leads to monodictyphenone via cleavage of the C-10/C-10a bond of chrysophanol. Alternative cleavage at the C-4a/C-10 bond of chrysophanol also leads to the formation some cephalone F. Further conversion to agnestins A and B, requires reduction to dihydro-monodictyphenone, oxidation to agnestin C probably via an epoxide, and rearrangement to either agnestin A or agnestin B directly, although agnestin A or agnestin B can also interconvert. Within the cluster, AgnR1 is the only unassigned oxidoreductase present which could be involved in this conversion. However, AgnR1 seems not to be involved in this step, and thus genes involved in the proposed oxidation/reduction may be located elsewhere on the genome. Further agnestin A derivatives are probably formed by spontaneous decarboxylations, dehydrations and methanolysis reactions. This chain is Monooxygenase AgnR1, found in Paecilomyces divaricatus (Penicillium divaricatum).